The following is a 453-amino-acid chain: MNCRKYLLSGLAVFGLAATSAVAALSTDDYVEAAWMTTRFFGAQRSGQGPNWILDGTSNPTSFTKDSYNGKDVSGGWFDCGDHVMYGQSQGYASYVLALAYAEFTEVSTTFILVTTPTTRKPTTTPMKSGKPNKVRDLLEELRYEADFWVKAAIDGNNFVTVKGDGNADHQKWVTAGAMSKLGSGEGGEPRCITGNANDGFTSGLAAAMLAVMARVDPDTANQAKYLKAAKTAYSYAKSHKGVTNSQGFYESSWWDGRWEDGPFLAELELYRTTGENSYKTAAIDRYDNLKFSLGEGTHFMYSNVVPLSAVMAEAVFEETPHGMRKEAIGVLDLIYEEKAKDKIFQNPNGMGSGKFPVRVPSGGAFLYALSDKFNNTNEHMEMIEKNVSYLLGDNGSKKSYVVGFSKNGANAPSRPHHRGYYANEKRWRRSRRCSESSRKEQALGRYDCWRLY.

The first 26 residues, 1-26, serve as a signal peptide directing secretion; sequence MNCRKYLLSGLAVFGLAATSAVAALS. The active-site Nucleophile is the aspartate 82. A linker ('hinge') (Pro-Thr box) region spans residues 115–126; it reads TTPTTRKPTTTP. Histidine 417 is a catalytic residue.

It belongs to the glycosyl hydrolase 9 (cellulase E) family. Monomer.

Its subcellular location is the periplasm. It catalyses the reaction Endohydrolysis of (1-&gt;4)-beta-D-glucosidic linkages in cellulose, lichenin and cereal beta-D-glucans.. Functionally, high levels of endoglucanase activity detected on acid-swollen cellulose, ball-milled cellulose, and carboxymethyl cellulose; moderate levels detected on filter paper, phosphoric acid-swollen cellulose, lichenan, and xylan. This chain is Endoglucanase A (endA), found in Fibrobacter succinogenes (Bacteroides succinogenes).